Here is a 157-residue protein sequence, read N- to C-terminus: Endoribonuclease YbeY (157 aa).

Zn(2+) is bound by residues histidine 114, histidine 118, and histidine 124.

It belongs to the endoribonuclease YbeY family. Zn(2+) serves as cofactor.

The protein resides in the cytoplasm. Functionally, single strand-specific metallo-endoribonuclease involved in late-stage 70S ribosome quality control and in maturation of the 3' terminus of the 16S rRNA. In Salmonella typhimurium (strain LT2 / SGSC1412 / ATCC 700720), this protein is Endoribonuclease YbeY.